Reading from the N-terminus, the 356-residue chain is Tyrosine recombinase XerS (356 aa).

The region spanning 16–121 (IMPSYVLEYY…ALSSLYKYLT (106 aa)) is the Core-binding (CB) domain. In terms of domain architecture, Tyr recombinase spans 169–354 (GFLDYIDNEY…INEEQKNALD (186 aa)). Residues R210, K234, H306, R309, and H332 contribute to the active site. Y341 functions as the O-(3'-phospho-DNA)-tyrosine intermediate in the catalytic mechanism.

It belongs to the 'phage' integrase family. XerS subfamily.

The protein resides in the cytoplasm. With respect to regulation, ftsK is required for recombination. Site-specific tyrosine recombinase, which acts by catalyzing the cutting and rejoining of the recombining DNA molecules. Essential to convert dimers of the bacterial chromosome into monomers to permit their segregation at cell division. In Lactococcus lactis subsp. lactis (strain IL1403) (Streptococcus lactis), this protein is Tyrosine recombinase XerS.